A 101-amino-acid polypeptide reads, in one-letter code: Small ribosomal subunit protein uS14 (101 aa).

This sequence belongs to the universal ribosomal protein uS14 family. In terms of assembly, part of the 30S ribosomal subunit. Contacts proteins S3 and S10.

Binds 16S rRNA, required for the assembly of 30S particles and may also be responsible for determining the conformation of the 16S rRNA at the A site. This Pseudoalteromonas translucida (strain TAC 125) protein is Small ribosomal subunit protein uS14.